We begin with the raw amino-acid sequence, 50 residues long: Large ribosomal subunit protein bL33B (50 aa).

The protein belongs to the bacterial ribosomal protein bL33 family.

This Mycoplasmopsis agalactiae (strain NCTC 10123 / CIP 59.7 / PG2) (Mycoplasma agalactiae) protein is Large ribosomal subunit protein bL33B.